The following is a 341-amino-acid chain: MHTDLDTDMDADTETVALCSSSSRQASPSGTPTPEADTTLLKQKPEKLLAELDRGGPPPAPGVPRRRGSMPVPYKHQLRRAQAVDELDWPPQASSSGSSDSLGSGEAALAQKDGVFKVMLLGESGVGKSTLAGTFGGLQGDNAHEMENSEDTYERRIMVDKEEVTLIVYDIWEQGDAGGWLQDHCLQTGDAFLIVFSVTDRRSFSKVPETLLRLRAGRPHHDLPVILVGNKSDLARSREVSLEEGRHLAGTLSCKHIETSAALHHNTRELFEGAVRQIRLRRGRGHAGGQRPEPSSPDGPAPPTRRESLTKKAKRFLANLVPRNAKFFKQRSRSCHDLSVL.

Over residues 1 to 13 (MHTDLDTDMDADT) the composition is skewed to acidic residues. 2 disordered regions span residues 1 to 72 (MHTD…SMPV) and 84 to 106 (VDELDWPPQASSSGSSDSLGSGE). Residues 18–32 (LCSSSSRQASPSGTP) are compositionally biased toward polar residues. Phosphoserine is present on S27. Residues 43 to 54 (QKPEKLLAELDR) show a composition bias toward basic and acidic residues. The segment covering 94–105 (SSSGSSDSLGSG) has biased composition (low complexity). Residues 122–129 (GESGVGKS), 230–233 (NKSD), and 261–262 (AA) contribute to the GTP site. Residues 282 to 309 (RGRGHAGGQRPEPSSPDGPAPPTRRESL) are disordered. Positions 294 to 303 (PSSPDGPAPP) are enriched in pro residues. At S296 the chain carries Phosphoserine.

It belongs to the small GTPase superfamily. RGK family. As to expression, expressed in brain and kidney.

It is found in the cell membrane. Binds GTP saturably and exhibits a low intrinsic rate of GTP hydrolysis. This Rattus norvegicus (Rat) protein is GTP-binding protein REM 2 (Rem2).